The chain runs to 407 residues: Peptidase T (407 aa).

Residue His-82 coordinates Zn(2+). Asp-84 is a catalytic residue. Asp-143 is a Zn(2+) binding site. The active-site Proton acceptor is the Glu-177. Zn(2+) is bound by residues Glu-178, Asp-200, and His-382.

The protein belongs to the peptidase M20B family. Zn(2+) is required as a cofactor.

It is found in the cytoplasm. The enzyme catalyses Release of the N-terminal residue from a tripeptide.. Cleaves the N-terminal amino acid of tripeptides. The chain is Peptidase T from Streptococcus pyogenes serotype M3 (strain ATCC BAA-595 / MGAS315).